We begin with the raw amino-acid sequence, 122 residues long: Large ribosomal subunit protein uL14 (122 aa).

Belongs to the universal ribosomal protein uL14 family. Part of the 50S ribosomal subunit. Forms a cluster with proteins L3 and L19. In the 70S ribosome, L14 and L19 interact and together make contacts with the 16S rRNA in bridges B5 and B8.

In terms of biological role, binds to 23S rRNA. Forms part of two intersubunit bridges in the 70S ribosome. The polypeptide is Large ribosomal subunit protein uL14 (Caldanaerobacter subterraneus subsp. tengcongensis (strain DSM 15242 / JCM 11007 / NBRC 100824 / MB4) (Thermoanaerobacter tengcongensis)).